A 129-amino-acid polypeptide reads, in one-letter code: Large ribosomal subunit protein bL20 (129 aa).

Belongs to the bacterial ribosomal protein bL20 family.

Functionally, binds directly to 23S ribosomal RNA and is necessary for the in vitro assembly process of the 50S ribosomal subunit. It is not involved in the protein synthesizing functions of that subunit. The polypeptide is Large ribosomal subunit protein bL20 (Mycobacterium leprae (strain Br4923)).